The primary structure comprises 88 residues: Phosphocarrier protein HPr (88 aa).

Residues 1-88 enclose the HPr domain; the sequence is MKKFQAVIKD…KACLEKNKVI (88 aa). Histidine 15 (pros-phosphohistidine intermediate) is an active-site residue. The residue at position 47 (serine 47) is a Phosphoserine; by HPrK/P.

Belongs to the HPr family.

Its subcellular location is the cytoplasm. Phosphorylation on Ser-47 inhibits the phosphoryl transfer from enzyme I to HPr. General (non sugar-specific) component of the phosphoenolpyruvate-dependent sugar phosphotransferase system (sugar PTS). This major carbohydrate active-transport system catalyzes the phosphorylation of incoming sugar substrates concomitantly with their translocation across the cell membrane. The phosphoryl group from phosphoenolpyruvate (PEP) is transferred to the phosphoryl carrier protein HPr by enzyme I. Phospho-HPr then transfers it to the PTS EIIA domain. In terms of biological role, P-Ser-HPr interacts with the catabolite control protein A (CcpA), forming a complex that binds to DNA at the catabolite response elements cre, operator sites preceding a large number of catabolite-regulated genes. Thus, P-Ser-HPr is a corepressor in carbon catabolite repression (CCR), a mechanism that allows bacteria to coordinate and optimize the utilization of available carbon sources. P-Ser-HPr also plays a role in inducer exclusion, in which it probably interacts with several non-PTS permeases and inhibits their transport activity. The protein is Phosphocarrier protein HPr (ptsH) of Mycoplasma genitalium (strain ATCC 33530 / DSM 19775 / NCTC 10195 / G37) (Mycoplasmoides genitalium).